The chain runs to 491 residues: Protein nucleotidyltransferase YdiU (491 aa).

ATP-binding residues include Gly92, Gly94, Arg95, Lys115, Asp127, Gly128, Arg178, and Arg185. Asp254 acts as the Proton acceptor in catalysis. Positions 255 and 264 each coordinate Mg(2+). Asp264 contacts ATP.

This sequence belongs to the SELO family. It depends on Mg(2+) as a cofactor. The cofactor is Mn(2+).

The catalysed reaction is L-seryl-[protein] + ATP = 3-O-(5'-adenylyl)-L-seryl-[protein] + diphosphate. It carries out the reaction L-threonyl-[protein] + ATP = 3-O-(5'-adenylyl)-L-threonyl-[protein] + diphosphate. It catalyses the reaction L-tyrosyl-[protein] + ATP = O-(5'-adenylyl)-L-tyrosyl-[protein] + diphosphate. The enzyme catalyses L-histidyl-[protein] + UTP = N(tele)-(5'-uridylyl)-L-histidyl-[protein] + diphosphate. The catalysed reaction is L-seryl-[protein] + UTP = O-(5'-uridylyl)-L-seryl-[protein] + diphosphate. It carries out the reaction L-tyrosyl-[protein] + UTP = O-(5'-uridylyl)-L-tyrosyl-[protein] + diphosphate. Functionally, nucleotidyltransferase involved in the post-translational modification of proteins. It can catalyze the addition of adenosine monophosphate (AMP) or uridine monophosphate (UMP) to a protein, resulting in modifications known as AMPylation and UMPylation. This Mycolicibacterium paratuberculosis (strain ATCC BAA-968 / K-10) (Mycobacterium paratuberculosis) protein is Protein nucleotidyltransferase YdiU.